The chain runs to 555 residues: Glutamine--tRNA ligase (555 aa).

The 'HIGH' region motif lies at 35–45 (PEPNGYLHIGH). ATP-binding positions include 36–38 (EPN) and 42–48 (HIGHAKS). L-glutamine contacts are provided by D68 and Y213. Residues T232 and 262–263 (RL) contribute to the ATP site. A 'KMSKS' region motif is present at residues 269-273 (ITSKR).

It belongs to the class-I aminoacyl-tRNA synthetase family. As to quaternary structure, monomer.

It is found in the cytoplasm. It catalyses the reaction tRNA(Gln) + L-glutamine + ATP = L-glutaminyl-tRNA(Gln) + AMP + diphosphate. The protein is Glutamine--tRNA ligase of Azotobacter vinelandii (strain DJ / ATCC BAA-1303).